A 434-amino-acid polypeptide reads, in one-letter code: Methylenetetrahydrofolate--tRNA-(uracil-5-)-methyltransferase TrmFO (434 aa).

9–14 provides a ligand contact to FAD; sequence GAGLAG.

It belongs to the MnmG family. TrmFO subfamily. FAD serves as cofactor.

The protein localises to the cytoplasm. It catalyses the reaction uridine(54) in tRNA + (6R)-5,10-methylene-5,6,7,8-tetrahydrofolate + NADH + H(+) = 5-methyluridine(54) in tRNA + (6S)-5,6,7,8-tetrahydrofolate + NAD(+). It carries out the reaction uridine(54) in tRNA + (6R)-5,10-methylene-5,6,7,8-tetrahydrofolate + NADPH + H(+) = 5-methyluridine(54) in tRNA + (6S)-5,6,7,8-tetrahydrofolate + NADP(+). Its function is as follows. Catalyzes the folate-dependent formation of 5-methyl-uridine at position 54 (M-5-U54) in all tRNAs. This chain is Methylenetetrahydrofolate--tRNA-(uracil-5-)-methyltransferase TrmFO, found in Listeria welshimeri serovar 6b (strain ATCC 35897 / DSM 20650 / CCUG 15529 / CIP 8149 / NCTC 11857 / SLCC 5334 / V8).